A 169-amino-acid polypeptide reads, in one-letter code: 2-C-methyl-D-erythritol 2,4-cyclodiphosphate synthase (169 aa).

The a divalent metal cation site is built by D13 and H15. Residues 13 to 15 and 40 to 41 each bind 4-CDP-2-C-methyl-D-erythritol 2-phosphate; these read DIH and HS. H48 is an a divalent metal cation binding site. 4-CDP-2-C-methyl-D-erythritol 2-phosphate is bound by residues 62–64, 138–141, and R148; these read DIG and TTNE.

Belongs to the IspF family. As to quaternary structure, homotrimer. The cofactor is a divalent metal cation.

The catalysed reaction is 4-CDP-2-C-methyl-D-erythritol 2-phosphate = 2-C-methyl-D-erythritol 2,4-cyclic diphosphate + CMP. The protein operates within isoprenoid biosynthesis; isopentenyl diphosphate biosynthesis via DXP pathway; isopentenyl diphosphate from 1-deoxy-D-xylulose 5-phosphate: step 4/6. Functionally, involved in the biosynthesis of isopentenyl diphosphate (IPP) and dimethylallyl diphosphate (DMAPP), two major building blocks of isoprenoid compounds. Catalyzes the conversion of 4-diphosphocytidyl-2-C-methyl-D-erythritol 2-phosphate (CDP-ME2P) to 2-C-methyl-D-erythritol 2,4-cyclodiphosphate (ME-CPP) with a corresponding release of cytidine 5-monophosphate (CMP). This is 2-C-methyl-D-erythritol 2,4-cyclodiphosphate synthase from Akkermansia muciniphila (strain ATCC BAA-835 / DSM 22959 / JCM 33894 / BCRC 81048 / CCUG 64013 / CIP 107961 / Muc).